A 283-amino-acid polypeptide reads, in one-letter code: MEMO1 family protein MK0963 (283 aa).

Belongs to the MEMO1 family.

The chain is MEMO1 family protein MK0963 from Methanopyrus kandleri (strain AV19 / DSM 6324 / JCM 9639 / NBRC 100938).